The following is a 726-amino-acid chain: Methionine--tRNA ligase (726 aa).

Residues 12 to 22 (PYVNNIPHLGN) carry the 'HIGH' region motif. Positions 143, 146, 155, and 158 each coordinate Zn(2+). The 'KMSKS' region motif lies at 330–334 (KFSKS). Lysine 333 serves as a coordination point for ATP. The tRNA-binding domain maps to 562-667 (FSEQICLKTV…DNPIPGERVI (106 aa)).

Belongs to the class-I aminoacyl-tRNA synthetase family. MetG type 1 subfamily. As to quaternary structure, homodimer. It depends on Zn(2+) as a cofactor.

The protein resides in the cytoplasm. It catalyses the reaction tRNA(Met) + L-methionine + ATP = L-methionyl-tRNA(Met) + AMP + diphosphate. Its function is as follows. Is required not only for elongation of protein synthesis but also for the initiation of all mRNA translation through initiator tRNA(fMet) aminoacylation. This chain is Methionine--tRNA ligase, found in Borrelia duttonii (strain Ly).